A 255-amino-acid polypeptide reads, in one-letter code: Diphthine synthase (255 aa).

S-adenosyl-L-methionine-binding positions include Leu-9, Asp-85, Val-88, Ser-113–Ile-114, Leu-164, Ala-207, and His-232.

This sequence belongs to the diphthine synthase family. As to quaternary structure, homodimer.

It carries out the reaction 2-[(3S)-amino-3-carboxypropyl]-L-histidyl-[translation elongation factor 2] + 3 S-adenosyl-L-methionine = diphthine-[translation elongation factor 2] + 3 S-adenosyl-L-homocysteine + 3 H(+). Its pathway is protein modification; peptidyl-diphthamide biosynthesis. Functionally, S-adenosyl-L-methionine-dependent methyltransferase that catalyzes the trimethylation of the amino group of the modified target histidine residue in translation elongation factor 2 (EF-2), to form an intermediate called diphthine. The three successive methylation reactions represent the second step of diphthamide biosynthesis. The protein is Diphthine synthase of Methanococcus maripaludis (strain DSM 14266 / JCM 13030 / NBRC 101832 / S2 / LL).